We begin with the raw amino-acid sequence, 507 residues long: Glycerol kinase 1 (507 aa).

Thr-12 lines the ADP pocket. ATP contacts are provided by Thr-12, Thr-13, and Ser-14. Thr-12 is a binding site for sn-glycerol 3-phosphate. Residue Arg-16 coordinates ADP. Sn-glycerol 3-phosphate contacts are provided by Arg-82, Glu-83, Tyr-134, and Asp-249. Glycerol contacts are provided by Arg-82, Glu-83, Tyr-134, Asp-249, and Gln-250. ADP is bound by residues Thr-271 and Gly-315. Residues Thr-271, Gly-315, Gln-319, and Gly-416 each contribute to the ATP site. Residues Gly-416 and Asn-420 each contribute to the ADP site.

It belongs to the FGGY kinase family.

The catalysed reaction is glycerol + ATP = sn-glycerol 3-phosphate + ADP + H(+). It functions in the pathway polyol metabolism; glycerol degradation via glycerol kinase pathway; sn-glycerol 3-phosphate from glycerol: step 1/1. Inhibited by fructose 1,6-bisphosphate (FBP). Its function is as follows. Key enzyme in the regulation of glycerol uptake and metabolism. Catalyzes the phosphorylation of glycerol to yield sn-glycerol 3-phosphate. The sequence is that of Glycerol kinase 1 from Streptomyces coelicolor (strain ATCC BAA-471 / A3(2) / M145).